A 140-amino-acid chain; its full sequence is 3-hydroxyacyl-[acyl-carrier-protein] dehydratase FabZ (140 aa).

Residue His48 is part of the active site.

This sequence belongs to the thioester dehydratase family. FabZ subfamily.

It is found in the cytoplasm. The catalysed reaction is a (3R)-hydroxyacyl-[ACP] = a (2E)-enoyl-[ACP] + H2O. Involved in unsaturated fatty acids biosynthesis. Catalyzes the dehydration of short chain beta-hydroxyacyl-ACPs and long chain saturated and unsaturated beta-hydroxyacyl-ACPs. This chain is 3-hydroxyacyl-[acyl-carrier-protein] dehydratase FabZ, found in Caldicellulosiruptor saccharolyticus (strain ATCC 43494 / DSM 8903 / Tp8T 6331).